Consider the following 223-residue polypeptide: Cell division protein SepF (223 aa).

The interval 19–81 (YDDEYYDDRG…YPPPGGYRGG (63 aa)) is disordered. Basic and acidic residues predominate over residues 36-69 (PRFEDDYGRYEGRDFEDPRRDPRAGMRADLRGEP).

This sequence belongs to the SepF family. Homodimer. Interacts with FtsZ.

It is found in the cytoplasm. Its function is as follows. Cell division protein that is part of the divisome complex and is recruited early to the Z-ring. Probably stimulates Z-ring formation, perhaps through the cross-linking of FtsZ protofilaments. Its function overlaps with FtsA. This Mycobacterium ulcerans (strain Agy99) protein is Cell division protein SepF.